The chain runs to 160 residues: Cytochrome b6-f complex subunit 4 (160 aa).

The next 3 helical transmembrane spans lie at 36–56 (LLYIFPVVILGTIACNVGLAV), 95–115 (LLGVLLMVSVPAGLLTVPFLE), and 131–151 (TVFLIGTAAALWLGIGATLPI).

This sequence belongs to the cytochrome b family. PetD subfamily. As to quaternary structure, the 4 large subunits of the cytochrome b6-f complex are cytochrome b6, subunit IV (17 kDa polypeptide, petD), cytochrome f and the Rieske protein, while the 4 small subunits are petG, petL, petM and petN. The complex functions as a dimer.

The protein resides in the plastid. Its subcellular location is the chloroplast thylakoid membrane. Functionally, component of the cytochrome b6-f complex, which mediates electron transfer between photosystem II (PSII) and photosystem I (PSI), cyclic electron flow around PSI, and state transitions. This is Cytochrome b6-f complex subunit 4 from Arabidopsis thaliana (Mouse-ear cress).